The sequence spans 114 residues: MTKGQGFGFGLGKIKELQEAFAKAQQVQAGAQQLQQELEQMEIEGFSEGKLVKVIMSGNQEPRSVTILPEALEKGADELSQLVTDAMKDAYTQSTETMRTKMEELTSGLNLPGL.

This sequence belongs to the YbaB/EbfC family. As to quaternary structure, homodimer.

The protein resides in the cytoplasm. It localises to the nucleoid. Functionally, binds to DNA and alters its conformation. May be involved in regulation of gene expression, nucleoid organization and DNA protection. This Rippkaea orientalis (strain PCC 8801 / RF-1) (Cyanothece sp. (strain PCC 8801)) protein is Nucleoid-associated protein PCC8801_2554.